The primary structure comprises 1177 residues: DNA-directed RNA polymerase subunit beta' (1177 aa).

Zn(2+) contacts are provided by C60, C62, C75, and C78. D450, D452, and D454 together coordinate Mg(2+). Zn(2+)-binding residues include C795, C869, C876, and C879.

This sequence belongs to the RNA polymerase beta' chain family. In terms of assembly, the RNAP catalytic core consists of 2 alpha, 1 beta, 1 beta' and 1 omega subunit. When a sigma factor is associated with the core the holoenzyme is formed, which can initiate transcription. Mg(2+) serves as cofactor. Zn(2+) is required as a cofactor.

It catalyses the reaction RNA(n) + a ribonucleoside 5'-triphosphate = RNA(n+1) + diphosphate. Functionally, DNA-dependent RNA polymerase catalyzes the transcription of DNA into RNA using the four ribonucleoside triphosphates as substrates. This chain is DNA-directed RNA polymerase subunit beta', found in Clostridium botulinum (strain Alaska E43 / Type E3).